The chain runs to 148 residues: SsrA-binding protein (148 aa).

A disordered region spans residues 123–148 (KLHDKRETEKKRDWEREKARIMRSAT). The segment covering 126–142 (DKRETEKKRDWEREKAR) has biased composition (basic and acidic residues).

It belongs to the SmpB family.

The protein localises to the cytoplasm. Required for rescue of stalled ribosomes mediated by trans-translation. Binds to transfer-messenger RNA (tmRNA), required for stable association of tmRNA with ribosomes. tmRNA and SmpB together mimic tRNA shape, replacing the anticodon stem-loop with SmpB. tmRNA is encoded by the ssrA gene; the 2 termini fold to resemble tRNA(Ala) and it encodes a 'tag peptide', a short internal open reading frame. During trans-translation Ala-aminoacylated tmRNA acts like a tRNA, entering the A-site of stalled ribosomes, displacing the stalled mRNA. The ribosome then switches to translate the ORF on the tmRNA; the nascent peptide is terminated with the 'tag peptide' encoded by the tmRNA and targeted for degradation. The ribosome is freed to recommence translation, which seems to be the essential function of trans-translation. The protein is SsrA-binding protein of Burkholderia thailandensis (strain ATCC 700388 / DSM 13276 / CCUG 48851 / CIP 106301 / E264).